Reading from the N-terminus, the 362-residue chain is Phosphoserine aminotransferase (362 aa).

The L-glutamate site is built by Ser9 and Arg42. Pyridoxal 5'-phosphate contacts are provided by residues 76–77 (GR), Trp102, Thr153, Asp174, and Gln197. At Lys198 the chain carries N6-(pyridoxal phosphate)lysine. 239 to 240 (NT) contributes to the pyridoxal 5'-phosphate binding site.

This sequence belongs to the class-V pyridoxal-phosphate-dependent aminotransferase family. SerC subfamily. In terms of assembly, homodimer. The cofactor is pyridoxal 5'-phosphate.

The protein resides in the cytoplasm. It carries out the reaction O-phospho-L-serine + 2-oxoglutarate = 3-phosphooxypyruvate + L-glutamate. The enzyme catalyses 4-(phosphooxy)-L-threonine + 2-oxoglutarate = (R)-3-hydroxy-2-oxo-4-phosphooxybutanoate + L-glutamate. Its pathway is amino-acid biosynthesis; L-serine biosynthesis; L-serine from 3-phospho-D-glycerate: step 2/3. The protein operates within cofactor biosynthesis; pyridoxine 5'-phosphate biosynthesis; pyridoxine 5'-phosphate from D-erythrose 4-phosphate: step 3/5. Its function is as follows. Catalyzes the reversible conversion of 3-phosphohydroxypyruvate to phosphoserine and of 3-hydroxy-2-oxo-4-phosphonooxybutanoate to phosphohydroxythreonine. The polypeptide is Phosphoserine aminotransferase (Escherichia coli O139:H28 (strain E24377A / ETEC)).